The following is a 1083-amino-acid chain: Error-prone DNA polymerase (1083 aa).

Belongs to the DNA polymerase type-C family. DnaE2 subfamily.

Its subcellular location is the cytoplasm. It carries out the reaction DNA(n) + a 2'-deoxyribonucleoside 5'-triphosphate = DNA(n+1) + diphosphate. In terms of biological role, DNA polymerase involved in damage-induced mutagenesis and translesion synthesis (TLS). It is not the major replicative DNA polymerase. The protein is Error-prone DNA polymerase of Xanthomonas oryzae pv. oryzae (strain KACC10331 / KXO85).